Reading from the N-terminus, the 132-residue chain is Fatty acid-binding protein, liver (132 aa).

Val1 carries the N-acetylvaline modification. Tyr19 bears the Phosphotyrosine; by Tyr-kinases mark.

Belongs to the calycin superfamily. Fatty-acid binding protein (FABP) family.

The protein resides in the cytoplasm. FABPs are thought to play a role in the intracellular transport of long-chain fatty acids and their acyl-CoA esters. The protein is Fatty acid-binding protein, liver of Ginglymostoma cirratum (Nurse shark).